The sequence spans 258 residues: Imidazole glycerol phosphate synthase subunit HisF (258 aa).

Catalysis depends on residues Asp11 and Asp130.

The protein belongs to the HisA/HisF family. As to quaternary structure, heterodimer of HisH and HisF.

It is found in the cytoplasm. The enzyme catalyses 5-[(5-phospho-1-deoxy-D-ribulos-1-ylimino)methylamino]-1-(5-phospho-beta-D-ribosyl)imidazole-4-carboxamide + L-glutamine = D-erythro-1-(imidazol-4-yl)glycerol 3-phosphate + 5-amino-1-(5-phospho-beta-D-ribosyl)imidazole-4-carboxamide + L-glutamate + H(+). Its pathway is amino-acid biosynthesis; L-histidine biosynthesis; L-histidine from 5-phospho-alpha-D-ribose 1-diphosphate: step 5/9. Functionally, IGPS catalyzes the conversion of PRFAR and glutamine to IGP, AICAR and glutamate. The HisF subunit catalyzes the cyclization activity that produces IGP and AICAR from PRFAR using the ammonia provided by the HisH subunit. The protein is Imidazole glycerol phosphate synthase subunit HisF of Xanthomonas oryzae pv. oryzae (strain MAFF 311018).